The following is a 131-amino-acid chain: Actin-associated protein FAM107A (131 aa).

Residues 57-77 (VLEHRRRNQLIKKKEEELEAK) are a coiled coil. Residues 61 to 71 (RRRNQLIKKKE) carry the Nuclear localization signal motif.

In terms of assembly, interacts with ACTB. Interacts with COMMD1; this interaction stabilizes COMMD1 in the nucleus. Interacts with MAP1A. Interacts with PRDX1. Interacts with F-actin.

Its subcellular location is the nucleus. The protein resides in the cytoplasm. It is found in the cytoskeleton. The protein localises to the stress fiber. It localises to the cell junction. Its subcellular location is the focal adhesion. The protein resides in the cell projection. It is found in the ruffle membrane. The protein localises to the synapse. Functionally, stress-inducible actin-binding protein that plays a role in synaptic and cognitive functions by modulating actin filamentous (F-actin) dynamics. Mediates polymerization of globular actin to F-actin. Also binds to, stabilizes and bundles F-actin. Involved in synaptic function by regulating neurite outgrowth in an actin-dependent manner and for the acquisition of hippocampus-dependent cognitive function, such as learning and long-term memory. Plays a role in the actin and microtubule cytoskeleton organization; negatively regulates focal adhesion (FA) assembly promoting malignant glial cell migration in an actin-, microtubule- and MAP1A-dependent manner. Also involved in neuroblastoma G1/S phase cell cycle progression and cell proliferation inhibition by stimulating ubiquitination of NF-kappa-B subunit RELA and NF-kappa-B degradation in a COMMD1- and actin-dependent manner. May play a role in tumor development. The polypeptide is Actin-associated protein FAM107A (Rattus norvegicus (Rat)).